Consider the following 305-residue polypeptide: UDP-N-acetylenolpyruvoylglucosamine reductase 2 (305 aa).

The 165-residue stretch at valine 33–glycine 197 folds into the FAD-binding PCMH-type domain. Arginine 176 is an active-site residue. The active-site Proton donor is the serine 226. The active site involves glutamate 296.

The protein belongs to the MurB family. FAD serves as cofactor.

Its subcellular location is the cytoplasm. The catalysed reaction is UDP-N-acetyl-alpha-D-muramate + NADP(+) = UDP-N-acetyl-3-O-(1-carboxyvinyl)-alpha-D-glucosamine + NADPH + H(+). It participates in cell wall biogenesis; peptidoglycan biosynthesis. Cell wall formation. This Bacillus cereus (strain ZK / E33L) protein is UDP-N-acetylenolpyruvoylglucosamine reductase 2.